A 547-amino-acid polypeptide reads, in one-letter code: MAAKDVVFGDAARAKMVEGVNILANAVKVTLGPKGRNVVLERSFGGPTVTKDGVSVAKEIELKDKLQNMGAQMVKEVASKTSDNAGDGTTTATVLAQSIVREGMKFVAAGMNPMDLKRGIDKAVGAAVEELKKISKPTTTSKEIAQVGAISANSDASIGERIAEAMDKVGKEGVITVEDGKSLADELEVVEGMQFDRGYLSPYFINNPEKQVVALDNPFVLLFDKKISNIRDLLPVLEQVAKAGRPLLIIAEDVEGEALATLVVNNIRGILKTAAVKAPGFGDRRKAMLEDIAILTGGTVIAEEVGLTLEKATLNDLGQAKRIEIGKENTIIIDGAGDAAGIEGRVKQIRAQIEEATSDYDREKLQERVAKLAGGVAVIKVGAATEVEMKEKKARVEDALHATRAAVEEGIVPGGGVALLRARAAISALQGDNADQNAGIKIVLRAMEEPLRQIVLNAGEEASVVVAKVIEGKGNYGYNAASGEYGDLVEMGVLDPTKVTRTALQNAASVASLMLTTDCAVAETPKEESAPAMPGGMGGMGGMEGMM.

Residues 30–33 (TLGP), lysine 51, 87–91 (DGTTT), glycine 415, 479–481 (NAA), and aspartate 495 each bind ATP.

It belongs to the chaperonin (HSP60) family. As to quaternary structure, forms a cylinder of 14 subunits composed of two heptameric rings stacked back-to-back. Interacts with the co-chaperonin GroES.

The protein resides in the cytoplasm. It carries out the reaction ATP + H2O + a folded polypeptide = ADP + phosphate + an unfolded polypeptide.. Functionally, together with its co-chaperonin GroES, plays an essential role in assisting protein folding. The GroEL-GroES system forms a nano-cage that allows encapsulation of the non-native substrate proteins and provides a physical environment optimized to promote and accelerate protein folding. This Cupriavidus taiwanensis (strain DSM 17343 / BCRC 17206 / CCUG 44338 / CIP 107171 / LMG 19424 / R1) (Ralstonia taiwanensis (strain LMG 19424)) protein is Chaperonin GroEL.